The sequence spans 460 residues: Receptor-like cytosolic serine/threonine-protein kinase RBK2 (460 aa).

The interval 1-67 (MNSASAHDLR…DADTDVQCKN (67 aa)) is disordered. Positions 7–23 (HDLRLLEVDKEKQDPKS) are enriched in basic and acidic residues. In terms of domain architecture, Protein kinase spans 143-415 (FSPENIIGRG…VELLLGHEDV (273 aa)). Residues 149–157 (IGRGGYADV) and Lys171 contribute to the ATP site. The active-site Proton acceptor is the Asp267. Thr307 carries the post-translational modification Phosphothreonine. Tyr315 is modified (phosphotyrosine).

It belongs to the protein kinase superfamily. Ser/Thr protein kinase family. As to quaternary structure, interacts with ARAC5 and ARAC10.

It is found in the cytoplasm. The enzyme catalyses L-seryl-[protein] + ATP = O-phospho-L-seryl-[protein] + ADP + H(+). It catalyses the reaction L-threonyl-[protein] + ATP = O-phospho-L-threonyl-[protein] + ADP + H(+). The chain is Receptor-like cytosolic serine/threonine-protein kinase RBK2 (RBK2) from Arabidopsis thaliana (Mouse-ear cress).